The following is a 324-amino-acid chain: 2,3,4,5-tetrahydropyridine-2,6-dicarboxylate N-succinyltransferase (324 aa).

Mg(2+) contacts are provided by Asp173 and Glu190. Residue Glu206 is the Acyl-anhydride intermediate of the active site. Succinyl-CoA is bound by residues Arg208, Gly223, Ser226, Ala249, 264–265, Gly272, Lys284, and 297–300; these read EA and RRNS.

This sequence belongs to the type 2 tetrahydrodipicolinate N-succinyltransferase family. As to quaternary structure, homotrimer.

The protein resides in the cytoplasm. It carries out the reaction (S)-2,3,4,5-tetrahydrodipicolinate + succinyl-CoA + H2O = (S)-2-succinylamino-6-oxoheptanedioate + CoA. Its pathway is amino-acid biosynthesis; L-lysine biosynthesis via DAP pathway; LL-2,6-diaminopimelate from (S)-tetrahydrodipicolinate (succinylase route): step 1/3. Catalyzes the conversion of the cyclic tetrahydrodipicolinate (THDP) into the acyclic N-succinyl-L-2-amino-6-oxopimelate using succinyl-CoA. The sequence is that of 2,3,4,5-tetrahydropyridine-2,6-dicarboxylate N-succinyltransferase from Geodermatophilus obscurus (strain ATCC 25078 / DSM 43160 / JCM 3152 / CCUG 61914 / KCC A-0152 / KCTC 9177 / NBRC 13315 / NRRL B-3577 / G-20).